The following is a 269-amino-acid chain: Interleukin-1 beta (269 aa).

Residues 1-116 (MAEVPELASE…TWDNEAYVHD (116 aa)) constitute a propeptide, removed in mature form; by CASP1. An Involved in interaction with TMED10 C-terminus motif is present at residues 228-241 (FESAQFPNWYISTS).

The protein belongs to the IL-1 family. As to quaternary structure, monomer. In its precursor form, weakly interacts with full-length MEFV; the mature cytokine does not interact at all. Interacts with integrins ITGAV:ITGBV and ITGA5:ITGB1; integrin-binding is required for IL1B signaling. Interacts with cargo receptor TMED10; the interaction is direct and is required for the secretion of IL1B mature form. Interacts with HSP90AB1; the interaction facilitates cargo translocation into the ERGIC. Interacts with HSP90B1; the interaction facilitates cargo translocation into the ERGIC. Post-translationally, activation of the IL1B precursor involves a CASP1-catalyzed proteolytic cleavage. Processing and secretion are temporarily associated. (Microbial infection) Cleavage by S.pyogenes cysteine protease SpeB promotes its activation independently of CASP1. As to expression, expressed in activated monocytes/macrophages (at protein level).

The protein resides in the cytoplasm. It localises to the cytosol. The protein localises to the secreted. It is found in the lysosome. Its subcellular location is the extracellular exosome. With respect to regulation, (Microbial infection) Cleavage by S.pyogenes cysteine protease SpeB promotes its activation independently of CASP1. SpeB-mediated maturation of IL1B plays a dual role depending on infection site: while IL1B inflammatory response prevents bacterial growth during invasive skin infections, it promotes streptococcal infection of the nasopharynx by disrupting colonization resistance mediated by the microbiota. Potent pro-inflammatory cytokine. Initially discovered as the major endogenous pyrogen, induces prostaglandin synthesis, neutrophil influx and activation, T-cell activation and cytokine production, B-cell activation and antibody production, and fibroblast proliferation and collagen production. Promotes Th17 differentiation of T-cells. Synergizes with IL12/interleukin-12 to induce IFNG synthesis from T-helper 1 (Th1) cells. Plays a role in angiogenesis by inducing VEGF production synergistically with TNF and IL6. Involved in transduction of inflammation downstream of pyroptosis: its mature form is specifically released in the extracellular milieu by passing through the gasdermin-D (GSDMD) pore. Acts as a sensor of S.pyogenes infection in skin: cleaved and activated by pyogenes SpeB protease, leading to an inflammatory response that prevents bacterial growth during invasive skin infection. This is Interleukin-1 beta from Homo sapiens (Human).